The primary structure comprises 166 residues: Phospholipase A2 inhibitor (166 aa).

Residues 1 to 19 form the signal peptide; that stretch reads MRLILLSGLLLLGIFLANG. The 116-residue stretch at 46-161 folds into the C-type lectin domain; sequence LKGSFLIVHK…CDDNLLVVCE (116 aa). 2 disulfides stabilise this stretch: cysteine 83–cysteine 160 and cysteine 138–cysteine 152. Asparagine 122 carries N-linked (GlcNAc...) asparagine glycosylation.

This sequence belongs to the alpha-type phospholipase A2 inhibitor family. As to quaternary structure, homotrimer; non-covalently linked. In terms of tissue distribution, expressed by the liver.

The protein localises to the secreted. In terms of biological role, this phospholipase A2 inhibitor binds directly phospholipase A2 in the presence or absence of calcium. This chain is Phospholipase A2 inhibitor, found in Bothrops jararacussu (Jararacussu).